Reading from the N-terminus, the 485-residue chain is REST corepressor 1 (485 aa).

2 disordered regions span residues M1–S26 and A49–Q110. Composition is skewed to low complexity over residues A49 to A64 and A74 to S95. The segment at P78–R257 is interaction with HDAC1. The region spanning G103–T189 is the ELM2 domain. K122 is covalently cross-linked (Glycyl lysine isopeptide (Lys-Gly) (interchain with G-Cter in SUMO2)). Position 127 is a phosphoserine (S127). The SANT 1 domain occupies P190 to T241. Residues S244 to I273 adopt a coiled-coil conformation. Residues S244–P314 are disordered. S260 carries the phosphoserine modification. Residues D278 to P288 are compositionally biased toward basic and acidic residues. Residues V296–A384 are interaction with KDM1A. Residue K297 forms a Glycyl lysine isopeptide (Lys-Gly) (interchain with G-Cter in SUMO2) linkage. Positions A334–G369 form a coiled coil. Positions K381–N432 constitute an SANT 2 domain. Residues A442–S485 form a disordered region. Over residues N450 to N463 the composition is skewed to polar residues. At S460 the chain carries Phosphoserine. Residue K466 forms a Glycyl lysine isopeptide (Lys-Gly) (interchain with G-Cter in SUMO2) linkage.

Belongs to the CoREST family. In terms of assembly, interacts directly with GFI1 and GFI1B in a RCOR/GFI/KDM1A/HDAC complex. Interacts with INMS1. Component of a BHC histone deacetylase complex that contains HDAC1, HDAC2, HMG20B/BRAF35, KDM1A, RCOR1/CoREST and PHF21A/BHC80. The BHC complex may also contain ZMYM2, ZNF217, ZMYM3, GSE1 and GTF2I. Interacts with REST. Interacts with the SMARCE1/BAF57, suggesting that the BHC complex may recruit the ATP-dependent chromatin-remodeling SWI-SNF complex. Interacts with SOX2. (Microbial infection) Interacts with herpes virus HSV-1 ICP0 protein; the interaction leads to the disruption of the BHC complex, thereby preventing the BHC complex from repressing transcription of viral genes. Post-translationally, phosphorylated by HSV-1 protein kinases in case of infection. Ubiquitously expressed.

It localises to the nucleus. Its function is as follows. Essential component of the BHC complex, a corepressor complex that represses transcription of neuron-specific genes in non-neuronal cells. The BHC complex is recruited at RE1/NRSE sites by REST and acts by deacetylating and demethylating specific sites on histones, thereby acting as a chromatin modifier. In the BHC complex, it serves as a molecular beacon for the recruitment of molecular machinery, including MeCP2 and SUV39H1, that imposes silencing across a chromosomal interval. Plays a central role in demethylation of Lys-4 of histone H3 by promoting demethylase activity of KDM1A on core histones and nucleosomal substrates. It also protects KDM1A from the proteasome. Component of a RCOR/GFI/KDM1A/HDAC complex that suppresses, via histone deacetylase (HDAC) recruitment, a number of genes implicated in multilineage blood cell development and controls hematopoietic differentiation. The protein is REST corepressor 1 (RCOR1) of Homo sapiens (Human).